Reading from the N-terminus, the 500-residue chain is Galactofuranose transporter ATP-binding protein YtfR (500 aa).

2 consecutive ABC transporter domains span residues 10 to 245 (LRTE…LGRE) and 259 to 497 (LSDK…IMNA). 42–49 (GENGAGKS) is an ATP binding site.

This sequence belongs to the ABC transporter superfamily. In terms of assembly, the complex is composed of two ATP-binding proteins (YtfR), two transmembrane proteins (YtfT and YjfF) and a solute-binding protein (YtfQ).

It is found in the cell inner membrane. The enzyme catalyses D-galactofuranose(out) + ATP + H2O = D-galactofuranose(in) + ADP + phosphate + H(+). In terms of biological role, part of the ABC transporter complex YtfQRT-YjfF involved in galactofuranose transport. Responsible for energy coupling to the transport system. This Escherichia coli O157:H7 protein is Galactofuranose transporter ATP-binding protein YtfR (ytfR).